Here is a 334-residue protein sequence, read N- to C-terminus: Formamidase (334 aa).

Residues 14–260 (FLVAAIQFPV…WEIVTGEIYP (247 aa)) enclose the CN hydrolase domain. The active-site Proton acceptor is Glu60. Lys133 serves as the catalytic Proton donor. The active-site Nucleophile is Cys166.

It belongs to the carbon-nitrogen hydrolase superfamily. Aliphatic amidase family.

The catalysed reaction is formamide + H2O = formate + NH4(+). In terms of biological role, is an aliphatic amidase with a restricted substrate specificity, as it only hydrolyzes formamide. The polypeptide is Formamidase (Helicobacter pylori (strain Shi470)).